The sequence spans 289 residues: Serine/threonine-protein phosphatase Pgam5, mitochondrial (289 aa).

The protein belongs to the phosphoglycerate mutase family. BPG-dependent PGAM subfamily. In terms of assembly, interacts with Pk92B/ASK1.

Its subcellular location is the mitochondrion outer membrane. The catalysed reaction is O-phospho-L-seryl-[protein] + H2O = L-seryl-[protein] + phosphate. It catalyses the reaction O-phospho-L-threonyl-[protein] + H2O = L-threonyl-[protein] + phosphate. Its function is as follows. Displays phosphatase activity for serine/threonine residues, and dephosphorylates and activates Pk92B kinase. Has apparently no phosphoglycerate mutase activity. This is Serine/threonine-protein phosphatase Pgam5, mitochondrial from Drosophila grimshawi (Hawaiian fruit fly).